The following is a 308-amino-acid chain: Olfactory receptor 4E2 (308 aa).

Residues 1–24 lie on the Extracellular side of the membrane; that stretch reads MGALNQTRVTEFIFLGLTDNWVLE. N-linked (GlcNAc...) asparagine glycosylation is present at Asn5. The chain crosses the membrane as a helical span at residues 25-45; it reads ILFFVPFTVTYMLTLLGNFLI. At 46-57 the chain is on the cytoplasmic side; sequence VVTIVFTPRLHN. A helical membrane pass occupies residues 58-78; sequence PMYFFLSNLSFIDICHSSVTV. Over 79 to 97 the chain is Extracellular; sequence PKMLEGLLLERKTISFDNC. An intrachain disulfide couples Cys97 to Cys179. Residues 98–118 traverse the membrane as a helical segment; that stretch reads IAQLFFLHLFACSEIFLLTIM. Cu cation is bound by residues His105 and Cys109. The Cytoplasmic portion of the chain corresponds to 119-143; the sequence is AYDRYVAICIPLHYSNVMNMKVCVQ. A helical membrane pass occupies residues 144 to 164; sequence LVFALWLGGTIHSLVQTFLTI. The Extracellular segment spans residues 165-204; the sequence is RLPYCGPNIIDSYFCDVPPVIKLACTDTYLTGILIVSNSG. A helical membrane pass occupies residues 205–225; that stretch reads TISLVCFLALVTSYTVILFSL. Residues 226-236 are Cytoplasmic-facing; the sequence is RKQSAEGRRKA. The helical transmembrane segment at 237-257 threads the bilayer; it reads LSTCSAHFMVVALFFGPCIFL. Residues 258–268 lie on the Extracellular side of the membrane; sequence YTRPDSSFSID. A Cu cation-binding site is contributed by Arg260. Residues 269-289 form a helical membrane-spanning segment; it reads KVVSVFYTVVTPLLNPLIYTL. The Cytoplasmic segment spans residues 290–308; that stretch reads RNEEVKTAMKHLRQRRICS.

This sequence belongs to the G-protein coupled receptor 1 family. In terms of tissue distribution, expressed in olfactory epithelium, specifically in the olfactory sensory neurons of the septal organ.

The protein resides in the cell membrane. Its activity is regulated as follows. Copper binding enhances receptor activity in response to odorant binding. In terms of biological role, olfactory receptor that is activated by the binding of organosulfur odorants with thioether groups such as (methylthio)methanethiol (MTMT) and bis(methylthiomethyl) disulfide. Also binds odorants cis-cyclooctene and tert-butyl mercaptan. The activity of this receptor is mediated by G proteins which activate adenylyl cyclase (Potential). This is Olfactory receptor 4E2 from Mus musculus (Mouse).